We begin with the raw amino-acid sequence, 111 residues long: uncharacterized protein (111 aa).

The 108-residue stretch at 4–111 folds into the HIT domain; sequence IFERIIEGAV…LGGGLLGSIA (108 aa). The Histidine triad motif motif lies at 96-100; sequence HLHIH.

This is an uncharacterized protein from Chlamydia trachomatis serovar D (strain ATCC VR-885 / DSM 19411 / UW-3/Cx).